Here is a 561-residue protein sequence, read N- to C-terminus: SUN domain-containing protein 5 (561 aa).

Residues glycine 36–valine 56 form a helical membrane-spanning segment. The SUN domain occupies asparagine 158 to alanine 318. Residues alanine 345 to alanine 367 form a disordered region. Residues methionine 454–lysine 499 are a coiled coil. The next 2 membrane-spanning stretches (helical) occupy residues leucine 501–threonine 521 and proline 540–leucine 560.

In terms of assembly, forms homomers. Interacts with SUN3 and TIK.

Its subcellular location is the membrane. In terms of biological role, encodes a member of the mid-SUN subfamily of SUN-domain proteins. It is involved in early seed development and nuclear morphology. [TAIR]. The protein is SUN domain-containing protein 5 of Arabidopsis thaliana (Mouse-ear cress).